Reading from the N-terminus, the 636-residue chain is Molybdenum cofactor biosynthesis protein 1 (636 aa).

Residues Met1–Ile383 form a molybdenum cofactor biosynthesis protein A region. Positions Arg19 to Arg40 are disordered. Residue Ser64 is modified to Phosphoserine. The Radical SAM core domain occupies Ser64–Glu279. Arg73 serves as a coordination point for GTP. Cys80 and Cys84 together coordinate [4Fe-4S] cluster. An S-adenosyl-L-methionine-binding site is contributed by Tyr86. Residue Cys87 coordinates [4Fe-4S] cluster. A GTP-binding site is contributed by Arg123. Position 127 (Gly127) interacts with S-adenosyl-L-methionine. A GTP-binding site is contributed by Thr154. Ser178 contributes to the S-adenosyl-L-methionine binding site. Residue Lys198 is modified to N6-acetyllysine. Lys215 is a binding site for GTP. S-adenosyl-L-methionine is bound at residue Met249. [4Fe-4S] cluster is bound by residues Cys312 and Cys315. Arg317–Arg319 is a binding site for GTP. Cys329 is a [4Fe-4S] cluster binding site. The segment at Gln414–Ala636 is molybdenum cofactor biosynthesis protein C. The tract at residues Ser444–His484 is disordered. An N6-acetyllysine modification is found at Lys528. Asp606 (for molybdenum cofactor biosynthesis protein C activity) is an active-site residue.

The protein in the C-terminal section; belongs to the MoaC family. In the N-terminal section; belongs to the radical SAM superfamily. MoaA family. In terms of assembly, isoform Mocs1a and isoform Mocs1b probably form a heterooligomer. [4Fe-4S] cluster is required as a cofactor.

The catalysed reaction is GTP + AH2 + S-adenosyl-L-methionine = (8S)-3',8-cyclo-7,8-dihydroguanosine 5'-triphosphate + 5'-deoxyadenosine + L-methionine + A + H(+). The enzyme catalyses (8S)-3',8-cyclo-7,8-dihydroguanosine 5'-triphosphate = cyclic pyranopterin phosphate + diphosphate. It participates in cofactor biosynthesis; molybdopterin biosynthesis. Isoform Mocs1a and isoform Mocs1b probably form a complex that catalyzes the conversion of 5'-GTP to cyclic pyranopterin monophosphate (cPMP). Mocs1a catalyzes the cyclization of GTP to (8S)-3',8-cyclo-7,8-dihydroguanosine 5'-triphosphate and Mocs1b catalyzes the subsequent conversion of (8S)-3',8-cyclo-7,8-dihydroguanosine 5'-triphosphate to cPMP. This is Molybdenum cofactor biosynthesis protein 1 (Mocs1) from Mus musculus (Mouse).